Reading from the N-terminus, the 128-residue chain is Aspartate 1-decarboxylase (128 aa).

The active-site Schiff-base intermediate with substrate; via pyruvic acid is the serine 25. Residue serine 25 is modified to Pyruvic acid (Ser). Residue threonine 57 participates in substrate binding. The Proton donor role is filled by tyrosine 58. 73-75 is a binding site for substrate; that stretch reads GSA.

Belongs to the PanD family. Heterooctamer of four alpha and four beta subunits. Pyruvate is required as a cofactor. Is synthesized initially as an inactive proenzyme, which is activated by self-cleavage at a specific serine bond to produce a beta-subunit with a hydroxyl group at its C-terminus and an alpha-subunit with a pyruvoyl group at its N-terminus.

It is found in the cytoplasm. It catalyses the reaction L-aspartate + H(+) = beta-alanine + CO2. Its pathway is cofactor biosynthesis; (R)-pantothenate biosynthesis; beta-alanine from L-aspartate: step 1/1. In terms of biological role, catalyzes the pyruvoyl-dependent decarboxylation of aspartate to produce beta-alanine. This Burkholderia multivorans (strain ATCC 17616 / 249) protein is Aspartate 1-decarboxylase.